Reading from the N-terminus, the 998-residue chain is Calcium-transporting ATPase 3, endoplasmic reticulum-type (998 aa).

Topologically, residues 1-48 are cytoplasmic; it reads MEDAYARSVSEVLDFFGVDPTKGLSDSQVVHHSRLYGRNVLPEEKRTP. The helical transmembrane segment at 49–69 threads the bilayer; sequence FWKLVLKQFDDLLVKILIVAA. Residues 70-89 lie on the Lumenal side of the membrane; sequence IVSFVLALANGETGLTAFLE. The chain crosses the membrane as a helical span at residues 90–109; the sequence is PFVILLILAANAAVGVITET. Over 110–250 the chain is Cytoplasmic; that stretch reads NAEKALEELR…DEATPLKKKL (141 aa). A helical transmembrane segment spans residues 251–270; the sequence is DEFGSFLAKVIAGICVLVWV. Topologically, residues 271-291 are lumenal; the sequence is VNIGHFSDPSHGGFFKGAIHY. Residues 292–309 form a helical membrane-spanning segment; the sequence is FKIAVALAVAAIPEGLPA. Positions 300, 301, 303, and 305 each coordinate Ca(2+). The Cytoplasmic portion of the chain corresponds to 310–746; the sequence is VVTTCLALGT…AEGRAIYNNT (437 aa). D347 serves as the catalytic 4-aspartylphosphate intermediate. Mg(2+)-binding residues include D692 and D696. Residues 747–766 form a helical membrane-spanning segment; that stretch reads KQFIRYMISSNIGEVVCIFV. Residues N757 and E760 each coordinate Ca(2+). Residues 767–776 lie on the Lumenal side of the membrane; the sequence is AAVLGIPDTL. The chain crosses the membrane as a helical span at residues 777–797; it reads APVQLLWVNLVTDGLPATAIG. Residues N785, T788, and D789 each contribute to the Ca(2+) site. Over 798-817 the chain is Cytoplasmic; it reads FNKQDSDVMKAKPRKVGEAV. A helical transmembrane segment spans residues 818–840; it reads VTGWLFFRYLVIGVYVGLATVAG. The Lumenal portion of the chain corresponds to 841 to 883; sequence FIWWFVYSDGGPKLTYSELMNFETCALRETTYPCSIFEDRHPS. The chain crosses the membrane as a helical span at residues 884–903; sequence TVAMTVLVVVEMFNALNNLS. E894 provides a ligand contact to Ca(2+). Topologically, residues 904–916 are cytoplasmic; that stretch reads ENQSLLVITPRSN. The helical transmembrane segment at 917–935 threads the bilayer; that stretch reads LWLVGSIILTMLLHVLILY. The Lumenal segment spans residues 936–950; the sequence is VHPLAVLFSVTPLSW. A helical transmembrane segment spans residues 951–971; it reads AEWTAVLYLSFPVIIIDELLK. The Cytoplasmic portion of the chain corresponds to 972–998; the sequence is FLSRNTGMRFRFRLRKADLLPKDRRDK.

The protein belongs to the cation transport ATPase (P-type) (TC 3.A.3) family. Type IIA subfamily. As to expression, expressed in root cap, in elongation and differentiation zones of roots, in vascular tissues of roots, leaves, floral pedicels and style, in leaves, including hydathodes and guard cells, in stamens, in petals, in sepals and in siliques.

It is found in the golgi apparatus membrane. It localises to the endosome membrane. The protein resides in the prevacuolar compartment membrane. It catalyses the reaction Ca(2+)(in) + ATP + H2O = Ca(2+)(out) + ADP + phosphate + H(+). Functionally, this magnesium-dependent enzyme catalyzes the hydrolysis of ATP coupled with the translocation of calcium from the cytosol to an endomembrane compartment. Involved in calcium-enhanced root growth, in tolerance to toxic levels of manganese and in secretory processes. Has a crucial role in manganese nutrition, but is not involved in transporting copper, iron or zinc. The chain is Calcium-transporting ATPase 3, endoplasmic reticulum-type from Arabidopsis thaliana (Mouse-ear cress).